The following is a 203-amino-acid chain: Serine hydrolase-like protein (203 aa).

The region spanning 33 to 145 (PPVLCLHGWL…FLLESDEMEN (113 aa)) is the AB hydrolase-1 domain. S108 is a catalytic residue.

This sequence belongs to the AB hydrolase superfamily.

Putative serine hydrolase. The protein is Serine hydrolase-like protein (SERHL) of Homo sapiens (Human).